The sequence spans 159 residues: NAD(P)H-quinone oxidoreductase subunit I, chloroplastic (159 aa).

4Fe-4S ferredoxin-type domains are found at residues 55–84 and 95–124; these read GRIHFEFDKCIVCEVCVRVCPINLPVVDWN and KNYSIDFGVCIFCGNCVEYCPTNCLSMTEE. Positions 64, 67, 70, 74, 104, 107, 110, and 114 each coordinate [4Fe-4S] cluster.

The protein belongs to the complex I 23 kDa subunit family. As to quaternary structure, NDH is composed of at least 16 different subunits, 5 of which are encoded in the nucleus. Requires [4Fe-4S] cluster as cofactor.

The protein resides in the plastid. The protein localises to the chloroplast thylakoid membrane. It catalyses the reaction a plastoquinone + NADH + (n+1) H(+)(in) = a plastoquinol + NAD(+) + n H(+)(out). The enzyme catalyses a plastoquinone + NADPH + (n+1) H(+)(in) = a plastoquinol + NADP(+) + n H(+)(out). Its function is as follows. NDH shuttles electrons from NAD(P)H:plastoquinone, via FMN and iron-sulfur (Fe-S) centers, to quinones in the photosynthetic chain and possibly in a chloroplast respiratory chain. The immediate electron acceptor for the enzyme in this species is believed to be plastoquinone. Couples the redox reaction to proton translocation, and thus conserves the redox energy in a proton gradient. The chain is NAD(P)H-quinone oxidoreductase subunit I, chloroplastic from Chara vulgaris (Common stonewort).